The sequence spans 310 residues: Glycerol-3-phosphate dehydrogenase [NAD(P)+] (310 aa).

Trp14, Arg34, Arg35, and Lys82 together coordinate NADPH. Sn-glycerol 3-phosphate contacts are provided by Lys82 and Gly110. An NADPH-binding site is contributed by Ser114. Sn-glycerol 3-phosphate contacts are provided by Lys165, Asp218, Ser228, Arg229, and Asn230. Lys165 (proton acceptor) is an active-site residue. Arg229 contacts NADPH. Glu255 contacts NADPH.

Belongs to the NAD-dependent glycerol-3-phosphate dehydrogenase family.

The protein localises to the cytoplasm. It catalyses the reaction sn-glycerol 3-phosphate + NAD(+) = dihydroxyacetone phosphate + NADH + H(+). The enzyme catalyses sn-glycerol 3-phosphate + NADP(+) = dihydroxyacetone phosphate + NADPH + H(+). It participates in membrane lipid metabolism; glycerophospholipid metabolism. Functionally, catalyzes the reduction of the glycolytic intermediate dihydroxyacetone phosphate (DHAP) to sn-glycerol 3-phosphate (G3P), the key precursor for phospholipid synthesis. This is Glycerol-3-phosphate dehydrogenase [NAD(P)+] from Acaryochloris marina (strain MBIC 11017).